The sequence spans 411 residues: Inhibin beta B chain (411 aa).

The first 28 residues, 1-28 (MDGLPGRALGAACLLLLVAGWLGPEAWG), serve as a signal peptide directing secretion. The interval 28–69 (GSPTPPPSPAAPPPPPPPGAPGGSQDTCTSCGGGGGGFRRPE) is disordered. The propeptide occupies 29-296 (SPTPPPSPAA…GDSRHRIRKR (268 aa)). Positions 30–47 (PTPPPSPAAPPPPPPPGA) are enriched in pro residues. An N-linked (GlcNAc...) asparagine glycan is attached at Asn-97. 4 disulfide bridges follow: Cys-300/Cys-308, Cys-307/Cys-376, Cys-336/Cys-408, and Cys-340/Cys-410.

Belongs to the TGF-beta family. In terms of assembly, dimeric, linked by one or more disulfide bonds. Inhibin B is a dimer of alpha and beta-B. Activin B is a homodimer of beta-B. Activin AB is a dimer of beta-A and beta-B. Interacts with FST and FSTL3. Activin B interacts with BMPR2. In terms of tissue distribution, uterus, testis, ovary, lung, kidney, brain, CJ7 embryonic stem cells, and possibly in liver.

The protein resides in the secreted. Inhibins and activins inhibit and activate, respectively, the secretion of follitropin by the pituitary gland. Inhibins/activins are involved in regulating a number of diverse functions such as hypothalamic and pituitary hormone secretion, gonadal hormone secretion, germ cell development and maturation, erythroid differentiation, insulin secretion, nerve cell survival, embryonic axial development or bone growth, depending on their subunit composition. Inhibins appear to oppose the functions of activins. In terms of biological role, activin B is a dimer of alpha and beta-B that plays a role in several essential biological processes including embryonic development, stem cell maintenance and differentiation, haematopoiesis, cell proliferation and wound healing. Signals through type I receptor ACVR1C, abundantly expressed in pancreatic beta cells, and type II receptors like ACVR2A. Upon ligand binding, these receptors phosphorylate intracellular signaling mediators SMAD2 and SMAD3, which form a complex with SMAD4, translocate to the nucleus, and regulate gene expression. Plays a crucial role in the induction of hepcidin by inflammation through activation of ACVR1C and subsequent phosphorylation of SMAD1/5/8. Regulates adipocyte lipid metabolism by decreasing non-esterified fatty acids and glycerol release and increases intracellular triglyceride content. Stimulates wound healing by promoting cell migration and hair follicle regeneration through the JNK and ERK signaling pathways downstream of RHOA. Functionally, inhibin B is a dimer of alpha and beta-B that plays a crucial role in the regulation of the reproductive system by inhibiting the secretion of follicle-stimulating hormone (FSH) from the anterior pituitary gland. Thereby, maintains reproductive homeostasis in both males and females. Acts as a more potent suppressor of FSH release than inhibin A. Functions as competitive receptor antagonist binding activin type II receptors with high affinity in the presence of the TGF-beta type III coreceptor/TGFBR3L. The polypeptide is Inhibin beta B chain (Inhbb) (Mus musculus (Mouse)).